A 176-amino-acid polypeptide reads, in one-letter code: MASSSGNDDDLTIPRAAINKMIKETLPNVRVANDARELVVNCCTEFIHLISSEANEICNKSEKKTISPEHVIQALESLGFGSYISEVKEVLQECKTVALKRRKASSRLENLGIPEEELLRQQQELFAKARQQQAELAQQEWLQMQQAAQQAQLAAASASASNQAGSSQDEEDDDDI.

The residue at position 2 (Ala-2) is an N-acetylalanine. In terms of domain architecture, Histone-fold spans 12–75; sequence TIPRAAINKM…ISPEHVIQAL (64 aa). Residues 100–103 carry the Nuclear localization signal motif; it reads KRRK. Ser-105, Ser-106, Ser-166, and Ser-167 each carry phosphoserine. Residues 152 to 167 show a composition bias toward low complexity; that stretch reads QLAAASASASNQAGSS. The interval 152 to 176 is disordered; that stretch reads QLAAASASASNQAGSSQDEEDDDDI.

It belongs to the NC2 beta/DR1 family. Heterodimer with DRAP1. DR1 exists in solution as a homotetramer that dissociates during interaction with TBP and then, after complexing with TBP, reassociates at a slow rate, to reconstitute the tetramer. Interacts with NFIL3. Component of the ADA2A-containing complex (ATAC), composed of KAT14, KAT2A, TADA2L, TADA3L, ZZ3, MBIP, WDR5, YEATS2, CCDC101 and DR1. Post-translationally, phosphorylation regulates its interaction with TBP. Not phosphorylated when bound to DRAP1.

It is found in the nucleus. Its function is as follows. The association of the DR1/DRAP1 heterodimer with TBP results in a functional repression of both activated and basal transcription of class II genes. This interaction precludes the formation of a transcription-competent complex by inhibiting the association of TFIIA and/or TFIIB with TBP. Can bind to DNA on its own. Component of the ATAC complex, a complex with histone acetyltransferase activity on histones H3 and H4. The polypeptide is Protein Dr1 (DR1) (Homo sapiens (Human)).